The following is a 57-amino-acid chain: Conotoxin Cal6.39 (57 aa).

The N-terminal stretch at 1–18 (MSGTTVLLLTCLFLVTMA) is a signal peptide. Intrachain disulfides connect C22/C36, C29/C46, and C35/C52.

Expressed by the venom duct.

Its subcellular location is the secreted. Functionally, probable neurotoxin. In Californiconus californicus (California cone), this protein is Conotoxin Cal6.39.